The following is a 240-amino-acid chain: DNA repair protein RecO (240 aa).

The protein belongs to the RecO family.

Involved in DNA repair and RecF pathway recombination. This Xanthomonas oryzae pv. oryzae (strain MAFF 311018) protein is DNA repair protein RecO.